Consider the following 285-residue polypeptide: HTH-type transcriptional regulator MurR (285 aa).

One can recognise an HTH rpiR-type domain in the interval 1–77 (MLYLTKIRNA…MALIGEYSAS (77 aa)). Residues 37-56 (SRKMAKQLGISQSSIVKFAQ) constitute a DNA-binding region (H-T-H motif). Residues 128-268 (IIEVISKAPF…FVGLVQLNDV (141 aa)) form the SIS domain.

Homotetramer.

It participates in amino-sugar metabolism; N-acetylmuramate degradation [regulation]. Its function is as follows. Represses the expression of the murPQ operon involved in the uptake and degradation of N-acetylmuramic acid (MurNAc). Binds to two adjacent inverted repeats within the operator region. MurNAc 6-phosphate, the substrate of MurQ, is the specific inducer that weakens binding of MurR to the operator. This is HTH-type transcriptional regulator MurR from Shigella sonnei (strain Ss046).